A 453-amino-acid polypeptide reads, in one-letter code: MKPRFPQNVYFLARYSYLRRFQHSQRRTFSSFLNNIRSNYSGARASPLGGSSGAGAGAGGGGTGDSKGNAFLVPGATMATILMLGALHARRLYEDKKIEEKREKGIELEFHPDIKASFLGVLPLRSISRAWGSFMSLEIPVWMRPYAYKAWARAFHSNLEEAALPLEEYTSLQDFFVRSLKEGCRPIDPDPCCLVSPVDGTVLRFGELKGNRGMIEQVKGHSYSVPALLGNNSLLPMEPEGKNESKEEAVGDKSDKSWLRVSLASPKLRENVSASPMKGLYYCVIYLKPGDYHRIHSPADWNATVRRHFAGRLFPVNERATRTIRNLYVENERVVLEGIWKEGFMALAAVGATNIGSIELFIEPELRTNKPKKKLFPTEPPEERVYDPEGLGLRLEKGKEVAVFNMGSTVVLIFQAPTANTPEGSSSSSDYRFCVKQGDRVRVGQALGRWKEE.

The transit peptide at 1-29 directs the protein to the mitochondrion; the sequence is MKPRFPQNVYFLARYSYLRRFQHSQRRTF. Over 30 to 74 the chain is Mitochondrial matrix; that stretch reads SSFLNNIRSNYSGARASPLGGSSGAGAGAGGGGTGDSKGNAFLVP. Residues 75–93 form a helical membrane-spanning segment; sequence GATMATILMLGALHARRLY. The Mitochondrial intermembrane portion of the chain corresponds to 94-453; it reads EDKKIEEKRE…GQALGRWKEE (360 aa). Active-site charge relay system; for autoendoproteolytic cleavage activity residues include D199, H296, and S408. S408 serves as the catalytic Schiff-base intermediate with substrate; via pyruvic acid; for decarboxylase activity. Pyruvic acid (Ser); by autocatalysis is present on S408.

It belongs to the phosphatidylserine decarboxylase family. PSD-B subfamily. Eukaryotic type I sub-subfamily. Heterodimer of a large membrane-associated beta subunit and a small pyruvoyl-containing alpha subunit. The cofactor is pyruvate. Is synthesized initially as an inactive proenzyme. Formation of the active enzyme involves a self-maturation process in which the active site pyruvoyl group is generated from an internal serine residue via an autocatalytic post-translational modification. Two non-identical subunits are generated from the proenzyme in this reaction, and the pyruvate is formed at the N-terminus of the alpha chain, which is derived from the carboxyl end of the proenzyme. The autoendoproteolytic cleavage occurs by a canonical serine protease mechanism, in which the side chain hydroxyl group of the serine supplies its oxygen atom to form the C-terminus of the beta chain, while the remainder of the serine residue undergoes an oxidative deamination to produce ammonia and the pyruvoyl prosthetic group on the alpha chain. During this reaction, the Ser that is part of the protease active site of the proenzyme becomes the pyruvoyl prosthetic group, which constitutes an essential element of the active site of the mature decarboxylase. In terms of tissue distribution, expressed in roots, leaves, stems and flowers.

Its subcellular location is the mitochondrion. The protein resides in the mitochondrion inner membrane. It catalyses the reaction a 1,2-diacyl-sn-glycero-3-phospho-L-serine + H(+) = a 1,2-diacyl-sn-glycero-3-phosphoethanolamine + CO2. Its pathway is phospholipid metabolism; phosphatidylethanolamine biosynthesis; phosphatidylethanolamine from CDP-diacylglycerol: step 2/2. Its function is as follows. Catalyzes the formation of phosphatidylethanolamine (PtdEtn) from phosphatidylserine (PtdSer). Plays a central role in phospholipid metabolism and in the interorganelle trafficking of phosphatidylserine. Contributes only to a minor proportion of PtdEtn production. The polypeptide is Phosphatidylserine decarboxylase proenzyme 1, mitochondrial (PSD1) (Arabidopsis thaliana (Mouse-ear cress)).